The following is a 530-amino-acid chain: Serendipity locus protein alpha (530 aa).

As to expression, transient expression in blastoderm from nuclear cycle 11 to the onset of gastrulation.

It is found in the cytoplasm. The protein localises to the cell membrane. Required for the cellularization of the syncytial blastoderm embryo. Involved in the localization of the actin filaments just prior to and during plasma membrane invagination. Sry-alpha together with nullo and bnk may provide auxiliary functions, by acting both to stabilize a large and dynamic microfilament structure and regulate its functions. The sequence is that of Serendipity locus protein alpha (Sry-alpha) from Drosophila melanogaster (Fruit fly).